Reading from the N-terminus, the 198-residue chain is Clytin (198 aa).

A propeptide spanning residues 1 to 9 (MADTASKYA) is cleaved from the precursor. EF-hand domains lie at 20-55 (KWVN…DICA), 60-95 (TPEQ…VDGW), 119-148 (EAVF…SGIC), and 149-184 (SSDE…FWYT). 5 residues coordinate Ca(2+): aspartate 33, asparagine 35, aspartate 37, lysine 39, and glutamate 44. 10 residues coordinate Ca(2+): aspartate 126, aspartate 128, serine 130, serine 132, glutamate 137, aspartate 162, aspartate 164, serine 166, lysine 168, and glutamate 173.

The protein belongs to the aequorin family.

Ca(2+)-dependent bioluminescence photoprotein. Displays an emission peak at 470 nm (blue light). Trace amounts of calcium ion trigger the intramolecular oxidation of the chromophore, coelenterazine into coelenteramide and CO(2) with the concomitant emission of light. The polypeptide is Clytin (Clytia gregaria (Gregarious jellyfish)).